Here is a 523-residue protein sequence, read N- to C-terminus: MNMKKATIAATAGIAVTAFAAPTIASASTVVVEAGDTLWGIAQDNGTTVDALKKANKLTTDKIVPGQKLQVTEVASEKTEKSVSATWLNVRSGAGVDNSIVTSLKGGTKVTVESTEANGWNKITYGEGKTGYVNGKYLGNAVTSAPSATPEVKQEETTQAAPAQQTKTEVKQATPAATTEKDAVETKTTAPAVDTNATTHTVKSGDTIWALSVKYGASVQDLMSWNNLSSSSIYVGQNIAVKQSAAKNTAPKAEAKTEAPAAEKQTAAPVVKESTNTSTTTTVKKETTTEKQTSTTKAPAQAAKPAPAPAPTVNTNASSYTVKSGDTLGKIASTFGTTVSKIKALNGLTSDNLQVGDVLKVKGTVPATNTNTATAPTTNTNNNTSSSNTSTPSKNNNTNQSSSNSSSASAIIAEAQKHLGKAYSWGGNGPTTFDCSGFTSYVFAQSGITLPRTSGAQYASTTKVSESEAQPGDLVFFDYGSGIAHVGIYVGNGQMINAQDNGVKYDNIHGSGWGQYLVGFGRV.

A signal peptide spans methionine 1–alanine 27. Residues serine 28 to valine 71 form the LysM 1 domain. The 65-residue stretch at lysine 78–valine 142 folds into the SH3b domain. A disordered region spans residues proline 146 to threonine 188. Over residues threonine 157–lysine 167 the composition is skewed to low complexity. The LysM 2 domain maps to threonine 198–valine 241. Low complexity-rich tracts occupy residues proline 251–threonine 282 and glutamate 290–serine 318. Disordered stretches follow at residues proline 251–lysine 323 and alanine 367–alanine 408. The LysM 3 domain maps to serine 318–valine 361. One can recognise a NlpC/P60 domain in the interval serine 405–valine 523. Catalysis depends on cysteine 435, which acts as the Nucleophile. Histidine 485 functions as the Proton acceptor in the catalytic mechanism. Asparagine 497 is a catalytic residue.

It belongs to the peptidase C40 family.

Functionally, this major extracellular protein may be involved in the invasion of non-professional phagocytic cells by Listeria. The chain is Probable endopeptidase p60 (iap) from Listeria seeligeri.